Reading from the N-terminus, the 767-residue chain is Probable beta-glucosidase K (767 aa).

N-linked (GlcNAc...) asparagine glycosylation is present at asparagine 19. Aspartate 232 is a catalytic residue. 3 N-linked (GlcNAc...) asparagine glycosylation sites follow: asparagine 324, asparagine 477, and asparagine 749. The region spanning 405–552 (EGQPGLRMRF…DPERAIARAV (148 aa)) is the PA14 domain. Positions 727-767 (LGRRGRSGSSPAVYRGRSNNVVNRTSHQGAQRISKGGFAAR) are disordered. Residues 743–757 (RSNNVVNRTSHQGAQ) show a composition bias toward polar residues.

This sequence belongs to the glycosyl hydrolase 3 family.

The protein resides in the secreted. It catalyses the reaction Hydrolysis of terminal, non-reducing beta-D-glucosyl residues with release of beta-D-glucose.. It functions in the pathway glycan metabolism; cellulose degradation. Functionally, beta-glucosidases are one of a number of cellulolytic enzymes involved in the degradation of cellulosic biomass. Catalyzes the last step releasing glucose from the inhibitory cellobiose. This Aspergillus fumigatus (strain ATCC MYA-4609 / CBS 101355 / FGSC A1100 / Af293) (Neosartorya fumigata) protein is Probable beta-glucosidase K (bglK).